The following is a 510-amino-acid chain: NAD(P)H-quinone oxidoreductase subunit 2 B, chloroplastic (510 aa).

13 helical membrane-spanning segments follow: residues 24 to 44 (LLLF…GLIL), 57 to 77 (IPWL…ALLF), 99 to 119 (IFQF…VEYI), 124 to 144 (MAIA…MFLC), 149 to 169 (LITI…LSGY), 183 to 203 (YLLM…WLYG), 227 to 247 (PGIS…LSPA), 295 to 315 (WHLL…LIAI), 323 to 343 (MLAY…IVGD), 354 to 374 (YMLF…LFGL), 395 to 415 (ALSL…AGFF), 418 to 438 (LHLF…IGLL), and 484 to 504 (MIVC…IIAI).

This sequence belongs to the complex I subunit 2 family. NDH is composed of at least 16 different subunits, 5 of which are encoded in the nucleus.

The protein localises to the plastid. It is found in the chloroplast thylakoid membrane. It catalyses the reaction a plastoquinone + NADH + (n+1) H(+)(in) = a plastoquinol + NAD(+) + n H(+)(out). It carries out the reaction a plastoquinone + NADPH + (n+1) H(+)(in) = a plastoquinol + NADP(+) + n H(+)(out). Functionally, NDH shuttles electrons from NAD(P)H:plastoquinone, via FMN and iron-sulfur (Fe-S) centers, to quinones in the photosynthetic chain and possibly in a chloroplast respiratory chain. The immediate electron acceptor for the enzyme in this species is believed to be plastoquinone. Couples the redox reaction to proton translocation, and thus conserves the redox energy in a proton gradient. The sequence is that of NAD(P)H-quinone oxidoreductase subunit 2 B, chloroplastic from Gossypium hirsutum (Upland cotton).